The primary structure comprises 1562 residues: NAC-alpha domain-containing protein 1 (1562 aa).

Residues 1 to 13 show a composition bias toward low complexity; it reads MPGEAARAELLLP. 8 disordered regions span residues 1–24, 56–110, 131–226, 249–288, 327–365, 381–458, 503–941, and 953–1423; these read MPGE…RTDL, FLPS…TEAP, SPRA…ADGD, SGWG…SSSW, TPLS…LQSL, RDDT…GAYL, TPQA…EPLA, and GCAP…AMSK. Basic and acidic residues predominate over residues 195 to 208; that stretch reads GDARDSEAELRDEL. The segment covering 275 to 287 has biased composition (low complexity); it reads SSESSLSADSSSS. Over residues 331–340 the composition is skewed to acidic residues; it reads PEEEEEEAVA. Over residues 385–397 the composition is skewed to low complexity; it reads SAASSDSDSASYA. Composition is skewed to polar residues over residues 449-458 and 550-564; these read PQTSDRGAYL and QEET…SPQN. A compositionally biased stretch (low complexity) spans 992–1007; the sequence is PAALDQVQQDDPQPAA. Residues 1048 to 1074 are compositionally biased toward basic and acidic residues; sequence PGREACLEARAHTGDGAKPDSPQKETL. Serine 1068 bears the Phosphoserine mark. Low complexity-rich tracts occupy residues 1172-1182 and 1231-1241; these read APTSAPTSQQP and APGTLAGAALP. Positions 1254-1264 are enriched in acidic residues; it reads PQEDSVEDEEP. 3 stretches are compositionally biased toward low complexity: residues 1265–1284, 1298–1308, and 1335–1344; these read PGSL…AAAV, SLSPHSPLLSP, and QSPAGPQGLS. Residues 1348 to 1357 show a composition bias toward acidic residues; the sequence is QQEDEDSLEE. The residue at position 1354 (serine 1354) is a Phosphoserine. Residues 1411 to 1476 form the NAC-A/B domain; that stretch reads SRSEKKARKA…AKIEDLSQQV (66 aa).

This sequence belongs to the NAC-alpha family.

Its subcellular location is the cytoplasm. It is found in the nucleus. Its function is as follows. May prevent inappropriate targeting of non-secretory polypeptides to the endoplasmic reticulum (ER). May bind to nascent polypeptide chains as they emerge from the ribosome and block their interaction with the signal recognition particle (SRP), which normally targets nascent secretory peptides to the ER. May also reduce the inherent affinity of ribosomes for protein translocation sites in the ER membrane (M sites). This Homo sapiens (Human) protein is NAC-alpha domain-containing protein 1 (NACAD).